A 276-amino-acid polypeptide reads, in one-letter code: Small ribosomal subunit protein uS2 (276 aa).

Disordered stretches follow at residues A209–V233 and V252–E276. The segment covering E211–A231 has biased composition (low complexity).

This sequence belongs to the universal ribosomal protein uS2 family. Component of the small ribosomal subunit. Mature ribosomes consist of a small (40S) and a large (60S) subunit. The 40S subunit contains about 33 different proteins and 1 molecule of RNA (18S). The 60S subunit contains about 49 different proteins and 3 molecules of RNA (25S, 5.8S and 5S). Interacts with RPS21.

The protein localises to the cytoplasm. In terms of biological role, required for the assembly and/or stability of the 40S ribosomal subunit. Required for the processing of the 20S rRNA-precursor to mature 18S rRNA in a late step of the maturation of 40S ribosomal subunits. This is Small ribosomal subunit protein uS2 from Mycosarcoma maydis (Corn smut fungus).